The following is a 257-amino-acid chain: Outer dense fiber protein 4 (257 aa).

The tract at residues 1-41 (MDAEYSGNEFPRSEGERDQHQRPGKERKSGEAGWGTGELGQ) is disordered. Residues 11-30 (PRSEGERDQHQRPGKERKSG) show a composition bias toward basic and acidic residues. Phosphoserine is present on Ser-64. 3 helical membrane-spanning segments follow: residues 80–100 (AQVLASELSLVAFILLLVVAF), 152–172 (VTFIFSTLMLFPINIWIFELE), and 179–199 (IGWSYFIGWLVLILYFTCAIL).

As to expression, expressed in testis and sperm; especially localized to sperm tail (at protein level).

It localises to the membrane. In terms of biological role, component of the outer dense fibers (ODF) of spermatozoa which could be involved in sperm tail structure, sperm movement and general organization of cellular cytoskeleton. The protein is Outer dense fiber protein 4 (ODF4) of Homo sapiens (Human).